Consider the following 57-residue polypeptide: Andropin (57 aa).

The signal sequence occupies residues 1 to 23 (MKYFVVLVVLALILAITVGPSDA).

The protein belongs to the andropin family. As to expression, ejaculatory duct of adult males.

It localises to the secreted. Functionally, male-specific peptide with moderate activity against Gram-positive bacteria. This is Andropin (Anp) from Drosophila mauritiana (Fruit fly).